Reading from the N-terminus, the 183-residue chain is Ribosome-recycling factor (183 aa).

This sequence belongs to the RRF family.

It localises to the cytoplasm. Responsible for the release of ribosomes from messenger RNA at the termination of protein biosynthesis. May increase the efficiency of translation by recycling ribosomes from one round of translation to another. In Deinococcus radiodurans (strain ATCC 13939 / DSM 20539 / JCM 16871 / CCUG 27074 / LMG 4051 / NBRC 15346 / NCIMB 9279 / VKM B-1422 / R1), this protein is Ribosome-recycling factor.